We begin with the raw amino-acid sequence, 490 residues long: Probable glycine dehydrogenase (decarboxylating) subunit 2 (490 aa).

N6-(pyridoxal phosphate)lysine is present on Lys-273.

Belongs to the GcvP family. C-terminal subunit subfamily. As to quaternary structure, the glycine cleavage system is composed of four proteins: P, T, L and H. In this organism, the P 'protein' is a heterodimer of two subunits. The cofactor is pyridoxal 5'-phosphate.

The enzyme catalyses N(6)-[(R)-lipoyl]-L-lysyl-[glycine-cleavage complex H protein] + glycine + H(+) = N(6)-[(R)-S(8)-aminomethyldihydrolipoyl]-L-lysyl-[glycine-cleavage complex H protein] + CO2. The glycine cleavage system catalyzes the degradation of glycine. The P protein binds the alpha-amino group of glycine through its pyridoxal phosphate cofactor; CO(2) is released and the remaining methylamine moiety is then transferred to the lipoamide cofactor of the H protein. In Staphylococcus aureus (strain MSSA476), this protein is Probable glycine dehydrogenase (decarboxylating) subunit 2.